We begin with the raw amino-acid sequence, 442 residues long: Methionine aminopeptidase 2-1 (442 aa).

The segment at 1–92 is disordered; the sequence is MAAQASEELE…ISELFPNNQY (92 aa). Positions 15–25 are enriched in polar residues; the sequence is NGQNGHAQEQV. The segment covering 30 to 47 has biased composition (acidic residues); the sequence is EAADNDDSEDDEKEEEGG. Basic residues predominate over residues 56-72; it reads AKKKKKRKPKKKKKGGA. His-195 is a binding site for substrate. A divalent metal cation contacts are provided by Asp-215, Asp-226, and His-295. His-303 provides a ligand contact to substrate. A divalent metal cation contacts are provided by Glu-328 and Glu-423.

The protein belongs to the peptidase M24A family. Methionine aminopeptidase eukaryotic type 2 subfamily. It depends on Co(2+) as a cofactor. The cofactor is Zn(2+). Mn(2+) serves as cofactor. Requires Fe(2+) as cofactor.

Its subcellular location is the cytoplasm. The enzyme catalyses Release of N-terminal amino acids, preferentially methionine, from peptides and arylamides.. Its function is as follows. Cotranslationally removes the N-terminal methionine from nascent proteins. The N-terminal methionine is often cleaved when the second residue in the primary sequence is small and uncharged (Met-Ala-, Cys, Gly, Pro, Ser, Thr, or Val). This chain is Methionine aminopeptidase 2-1, found in Talaromyces marneffei (strain ATCC 18224 / CBS 334.59 / QM 7333) (Penicillium marneffei).